Here is a 411-residue protein sequence, read N- to C-terminus: Serine--tRNA ligase (411 aa).

226–228 (TSE) provides a ligand contact to L-serine. An ATP-binding site is contributed by 257–259 (RKE). Glu280 serves as a coordination point for L-serine. ATP is bound at residue 344 to 347 (EISS). Position 379 (Ser379) interacts with L-serine.

Belongs to the class-II aminoacyl-tRNA synthetase family. Type-1 seryl-tRNA synthetase subfamily. In terms of assembly, homodimer. The tRNA molecule binds across the dimer.

Its subcellular location is the cytoplasm. The enzyme catalyses tRNA(Ser) + L-serine + ATP = L-seryl-tRNA(Ser) + AMP + diphosphate + H(+). The catalysed reaction is tRNA(Sec) + L-serine + ATP = L-seryl-tRNA(Sec) + AMP + diphosphate + H(+). The protein operates within aminoacyl-tRNA biosynthesis; selenocysteinyl-tRNA(Sec) biosynthesis; L-seryl-tRNA(Sec) from L-serine and tRNA(Sec): step 1/1. Its function is as follows. Catalyzes the attachment of serine to tRNA(Ser). Is also able to aminoacylate tRNA(Sec) with serine, to form the misacylated tRNA L-seryl-tRNA(Sec), which will be further converted into selenocysteinyl-tRNA(Sec). This is Serine--tRNA ligase from Campylobacter jejuni subsp. jejuni serotype O:6 (strain 81116 / NCTC 11828).